Consider the following 270-residue polypeptide: Type III pantothenate kinase (270 aa).

19 to 26 serves as a coordination point for ATP; the sequence is DIGNTSTT. Residues Y109 and 116–119 each bind substrate; that span reads GADR. Residue D118 is the Proton acceptor of the active site. A K(+)-binding site is contributed by D139. T142 contributes to the ATP binding site. Position 194 (T194) interacts with substrate.

It belongs to the type III pantothenate kinase family. As to quaternary structure, homodimer. NH4(+) is required as a cofactor. The cofactor is K(+).

Its subcellular location is the cytoplasm. It carries out the reaction (R)-pantothenate + ATP = (R)-4'-phosphopantothenate + ADP + H(+). It participates in cofactor biosynthesis; coenzyme A biosynthesis; CoA from (R)-pantothenate: step 1/5. Functionally, catalyzes the phosphorylation of pantothenate (Pan), the first step in CoA biosynthesis. In Chlorobaculum tepidum (strain ATCC 49652 / DSM 12025 / NBRC 103806 / TLS) (Chlorobium tepidum), this protein is Type III pantothenate kinase.